We begin with the raw amino-acid sequence, 376 residues long: Queuine tRNA-ribosyltransferase (376 aa).

Asp-89 serves as the catalytic Proton acceptor. Substrate contacts are provided by residues 89–93 (DSGGF), Asp-143, Gln-194, and Gly-221. The interval 252–258 (GVGIPSN) is RNA binding. Asp-271 (nucleophile) is an active-site residue. An RNA binding; important for wobble base 34 recognition region spans residues 276–280 (ARNGR). Zn(2+)-binding residues include Cys-309, Cys-311, Cys-314, and His-340.

Belongs to the queuine tRNA-ribosyltransferase family. Homodimer. Within each dimer, one monomer is responsible for RNA recognition and catalysis, while the other monomer binds to the replacement base PreQ1. Zn(2+) is required as a cofactor.

The enzyme catalyses 7-aminomethyl-7-carbaguanine + guanosine(34) in tRNA = 7-aminomethyl-7-carbaguanosine(34) in tRNA + guanine. The protein operates within tRNA modification; tRNA-queuosine biosynthesis. Its function is as follows. Catalyzes the base-exchange of a guanine (G) residue with the queuine precursor 7-aminomethyl-7-deazaguanine (PreQ1) at position 34 (anticodon wobble position) in tRNAs with GU(N) anticodons (tRNA-Asp, -Asn, -His and -Tyr). Catalysis occurs through a double-displacement mechanism. The nucleophile active site attacks the C1' of nucleotide 34 to detach the guanine base from the RNA, forming a covalent enzyme-RNA intermediate. The proton acceptor active site deprotonates the incoming PreQ1, allowing a nucleophilic attack on the C1' of the ribose to form the product. After dissociation, two additional enzymatic reactions on the tRNA convert PreQ1 to queuine (Q), resulting in the hypermodified nucleoside queuosine (7-(((4,5-cis-dihydroxy-2-cyclopenten-1-yl)amino)methyl)-7-deazaguanosine). The chain is Queuine tRNA-ribosyltransferase from Clostridium botulinum (strain Okra / Type B1).